A 262-amino-acid polypeptide reads, in one-letter code: Probable proteasome subunit beta type-7 (262 aa).

The protein belongs to the peptidase T1B family. In terms of assembly, the 26S proteasome consists of a 20S proteasome core and two 19S regulatory subunits. The 20S proteasome core is composed of 28 subunits that are arranged in four stacked rings, resulting in a barrel-shaped structure. The two end rings are each formed by seven alpha subunits, and the two central rings are each formed by seven beta subunits. The catalytic chamber with the active sites is on the inside of the barrel.

The protein localises to the cytoplasm. The protein resides in the nucleus. Functionally, non-catalytic component of the proteasome, a multicatalytic proteinase complex which is characterized by its ability to cleave peptides with Arg, Phe, Tyr, Leu, and Glu adjacent to the leaving group at neutral or slightly basic pH. The proteasome has an ATP-dependent proteolytic activity. The sequence is that of Probable proteasome subunit beta type-7 from Schizosaccharomyces pombe (strain 972 / ATCC 24843) (Fission yeast).